We begin with the raw amino-acid sequence, 58 residues long: U7-ctenitoxin-Pr1a (58 aa).

6 disulfide bridges follow: Cys2-Cys16, Cys9-Cys22, Cys13-Cys48, Cys15-Cys40, Cys18-Cys55, and Cys24-Cys38.

As to expression, expressed by the venom gland.

It localises to the secreted. Probable neurotoxin. The protein is U7-ctenitoxin-Pr1a of Phoneutria reidyi (Brazilian Amazonian armed spider).